We begin with the raw amino-acid sequence, 725 residues long: ABC transporter G family member 19 (725 aa).

One can recognise an ABC transporter domain in the interval 73 to 325 (LNFNNLQYDV…FSDFGRPIPE (253 aa)). An ATP-binding site is contributed by 117–124 (GASGAGKS). An ABC transmembrane type-2 domain is found at 419–629 (FETFILAKRY…PYEAVLINEF (211 aa)). The next 7 helical transmembrane spans lie at 438–458 (LVGT…TVYW), 473–493 (LFAF…PVFI), 515–535 (ISHS…FSAI), 537–557 (FWTV…LLIY), 577–597 (IMLC…LSGF), 606–626 (FYWT…AVLI), and 698–718 (LWIT…ALLF).

Belongs to the ABC transporter superfamily. ABCG family. Eye pigment precursor importer (TC 3.A.1.204) subfamily.

The protein localises to the vacuole membrane. In terms of biological role, confers selective resistance to kanamycin. This Arabidopsis thaliana (Mouse-ear cress) protein is ABC transporter G family member 19 (ABCG19).